The following is a 324-amino-acid chain: Putative arsenical pump-driving ATPase (324 aa).

Position 21–28 (21–28 (GKGGVGKT)) interacts with ATP.

The protein belongs to the arsA ATPase family.

The enzyme catalyses arsenite(in) + ATP + H2O = arsenite(out) + ADP + phosphate + H(+). Anion-transporting ATPase. Catalyzes the extrusion of arsenite. This Methanothermobacter thermautotrophicus (strain ATCC 29096 / DSM 1053 / JCM 10044 / NBRC 100330 / Delta H) (Methanobacterium thermoautotrophicum) protein is Putative arsenical pump-driving ATPase.